A 75-amino-acid chain; its full sequence is DNA-directed RNA polymerase subunit omega (75 aa).

It belongs to the RNA polymerase subunit omega family. In cyanobacteria the RNAP catalytic core is composed of 2 alpha, 1 beta, 1 beta', 1 gamma and 1 omega subunit. When a sigma factor is associated with the core the holoenzyme is formed, which can initiate transcription.

The catalysed reaction is RNA(n) + a ribonucleoside 5'-triphosphate = RNA(n+1) + diphosphate. Functionally, promotes RNA polymerase assembly. Latches the N- and C-terminal regions of the beta' subunit thereby facilitating its interaction with the beta and alpha subunits. The chain is DNA-directed RNA polymerase subunit omega from Microcystis aeruginosa (strain NIES-843 / IAM M-2473).